The following is a 121-amino-acid chain: Large ribosomal subunit protein bL12 (121 aa).

This sequence belongs to the bacterial ribosomal protein bL12 family. In terms of assembly, homodimer. Part of the ribosomal stalk of the 50S ribosomal subunit. Forms a multimeric L10(L12)X complex, where L10 forms an elongated spine to which 2 to 4 L12 dimers bind in a sequential fashion. Binds GTP-bound translation factors.

Its function is as follows. Forms part of the ribosomal stalk which helps the ribosome interact with GTP-bound translation factors. Is thus essential for accurate translation. The polypeptide is Large ribosomal subunit protein bL12 (Psychromonas ingrahamii (strain DSM 17664 / CCUG 51855 / 37)).